Consider the following 419-residue polypeptide: MRSWSVPEVPALPGRGPRVHLHDTATGGLVPVGPEAGTATLYVCGITPYDATHLGHANTYVAFDLLGRAWRDAGLDVRYVQNVTDVDDPLLERAEATGVDWRDLAESQVELFRGDMEALSVVPPQRYLGVVEAVDLVAEAVRDLLAAGAAYRVPGTDGGPDGDVYFPVDADAAFGTVGGYDLETMLALSAERGGDPQRPGKRNPLDPLLWRVERPGEPAWEAGELGRGRPGWHIECTAIALEHLGMPIDVQAGGSDLVFPHHEMGAAHAHLLRPRARPFARAYAHSGMVALDGEKMSKSKGNLVLVSRLVAAGVPAAVVRLAIVDHHWRTDWEWTDEVLAQARARHERWSAAVAAPAGPPAEALLATVRERLADDLDAPGAVAAVDAWVEQARTTAGTDAQAPDLVRRTVSALLGVVLP.

The disordered stretch occupies residues 1–20; the sequence is MRSWSVPEVPALPGRGPRVH. Zn(2+) is bound at residue C44. L-cysteinyl-5'-AMP is bound by residues 44–47, T59, and 82–84; these read CGIT and NVT. The 'HIGH' region motif lies at 46–56; the sequence is ITPYDATHLGH. Positions 191–196 match the 'ERGGDP' region motif; that stretch reads ERGGDP. W232 is a binding site for L-cysteinyl-5'-AMP. C236 serves as a coordination point for Zn(2+). 254 to 256 contributes to the L-cysteinyl-5'-AMP binding site; that stretch reads GSD. H261 serves as a coordination point for Zn(2+). V289 is a binding site for L-cysteinyl-5'-AMP. A 'KMSKS' region motif is present at residues 295 to 299; sequence KMSKS.

Belongs to the class-I aminoacyl-tRNA synthetase family. MshC subfamily. Monomer. Zn(2+) serves as cofactor.

It catalyses the reaction 1D-myo-inositol 2-amino-2-deoxy-alpha-D-glucopyranoside + L-cysteine + ATP = 1D-myo-inositol 2-(L-cysteinylamino)-2-deoxy-alpha-D-glucopyranoside + AMP + diphosphate + H(+). Functionally, catalyzes the ATP-dependent condensation of GlcN-Ins and L-cysteine to form L-Cys-GlcN-Ins. The chain is L-cysteine:1D-myo-inositol 2-amino-2-deoxy-alpha-D-glucopyranoside ligase from Kineococcus radiotolerans (strain ATCC BAA-149 / DSM 14245 / SRS30216).